We begin with the raw amino-acid sequence, 678 residues long: F-box/LRR-repeat protein 5 (678 aa).

Positions 1–159 are hemerythrin-like; sequence MAPFPDEVDL…IKKKVIAQHC (159 aa). Fe(3+) is bound by residues His15, His57, Glu58, Glu61, His80, His126, and Glu130. The F-box domain occupies 202–248; the sequence is SSSISSLPPEVMLNIFTYLNPQDLCRCSQVNTEWAQLAKTGSLWRHL. The segment at 285-308 is disordered; it reads YQEWDEDADIDESEETGEEEDSSI. Residues 287–306 show a composition bias toward acidic residues; the sequence is EWDEDADIDESEETGEEEDS. LRR repeat units follow at residues 314-340, 341-366, 367-392, 393-420, 566-594, 595-622, and 623-648; these read EKELLNSLVHYILPYVGHSVKTLVLAY, SSATSSKVIRQMLEYCPNLEHLDLTQ, TDISDSAFNGWHFGACQTLHHIDLSG, CDKITDLTLEKLSVALGIPSAHKKRLLK, HSDITDCFPGSAKSDQQAARALQFLSLSG, CHQITDHGLRALTIGGGLPKLEHLNLSG, and CLNVTGSGLQDLVATCPSLNDEHFYY. Positions 649, 663, 673, and 674 each coordinate [2Fe-2S] cluster. One copy of the LRR 8 repeat lies at 655–678; it reads PHGATASGCQNLQCGFRMCCRSGE.

As to quaternary structure, part of a SCF (SKP1-cullin-F-box) protein ligase complex. The cofactor is [2Fe-2S] cluster. Post-translationally, ubiquitinated upon iron and oxygen depletion, leading to its degradation by the proteasome. Ubiquitination is regulated by the hemerythrin-like region that acts as an oxygen and iron sensor.

The protein localises to the cytoplasm. The protein resides in the perinuclear region. Its subcellular location is the nucleus. Its pathway is protein modification; protein ubiquitination. In terms of biological role, component of some SCF (SKP1-cullin-F-box) protein ligase complex that plays a central role in iron homeostasis by promoting the ubiquitination and subsequent degradation of ireb2/irp2. Upon high iron and oxygen level, it specifically recognizes and binds ireb2/irp2, promoting its ubiquitination and degradation by the proteasome. The chain is F-box/LRR-repeat protein 5 (fbxl5) from Xenopus laevis (African clawed frog).